An 844-amino-acid polypeptide reads, in one-letter code: NADPH-Fe(3+) oxidoreductase subunit alpha (844 aa).

A 2Fe-2S ferredoxin-type domain is found at 1 to 78 (MVSLTIDGKD…GIKVTTQSEK (78 aa)). Residues C34, C45, C48, and C62 each coordinate [2Fe-2S] cluster. The 4Fe-4S His(Cys)3-ligated-type domain occupies 78-117 (KLSRIRQKIMELMLVNHPLDCPVCDAGGECDLQNACYGLG). Residues H94, C98, C101, C107, C146, C149, C152, C186, C189, C192, C196, C222, C225, C229, and C256 each coordinate [4Fe-4S] cluster. 4Fe-4S ferredoxin-type domains follow at residues 137–168 (PLIESDPNRCILCEKCVKVDHEIVGCNAIRVV) and 177–206 (DTVDGNPLNCEFCGNCVAACPTGTLISKPF). The 4Fe-4S Mo/W bis-MGD-type domain maps to 215-270 (FTTTPSVCPFCATGCQIEYHSRNGRVERVTSDDSTYNSGNLCINGRFGYSYINSPD).

Heterotetramer with 2 beta subunits. Requires [4Fe-4S] cluster as cofactor.

The protein resides in the cell inner membrane. Its activity is regulated as follows. Not regulated by FAD or FMN. Functionally, the SfrAB enzymatic complex is probably involved in acetate metabolism and does not participate directly in the reduction of Fe(3+) chelates. May serve as a major route for NADP regeneration. The protein is NADPH-Fe(3+) oxidoreductase subunit alpha (sfrA) of Geobacter sulfurreducens (strain DL-1 / KN400).